The primary structure comprises 324 residues: Olfactory receptor 2T2 (324 aa).

At 1 to 26 (MGMEGLLQNSTNFVLTGLITHPAFPG) the chain is on the extracellular side. N9 is a glycosylation site (N-linked (GlcNAc...) asparagine). A helical membrane pass occupies residues 27-50 (LLFAIVFSIFVVAITANLVMILLI). At 51–58 (HMDSRLHT) the chain is on the cytoplasmic side. A helical membrane pass occupies residues 59–80 (PMYFLLSQLSIMDTIYICITVP). Residues 81–101 (KMLQDLLSKDKTISFLGCAVQ) are Extracellular-facing. C98 and C190 are joined by a disulfide. A helical transmembrane segment spans residues 102-121 (IFLYLTLIGGEFFLLGLMAY). The Cytoplasmic segment spans residues 122–140 (DRYVAVCNPLRYPLLMNRR). The chain crosses the membrane as a helical span at residues 141–159 (VCLFMVVGSWVGGSLDGFM). Residues 160 to 196 (LTPVTMSFPFCRSREINHFFCEIPAVLKLSCTDTSLY) lie on the Extracellular side of the membrane. Residues 197–220 (ETLMYACCVLMLLIPLSVISVSYT) traverse the membrane as a helical segment. At 221-237 (HILLTVHRMNSAEGRRK) the chain is on the cytoplasmic side. The helical transmembrane segment at 238–260 (AFATCSSHIMVVSVFYGAAFYTN) threads the bilayer. The Extracellular segment spans residues 261–273 (VLPHSYHTPEKDK). The helical transmembrane segment at 274 to 293 (VVSAFYTILTPMLNPLIYSL) threads the bilayer. At 294–324 (RNKDVAAALRKVLGRCGSSQSIRVATVIRKG) the chain is on the cytoplasmic side.

Belongs to the G-protein coupled receptor 1 family.

The protein resides in the cell membrane. In terms of biological role, odorant receptor. This is Olfactory receptor 2T2 (OR2T2) from Homo sapiens (Human).